The chain runs to 82 residues: RNA-binding protein GWCH70_0105 (82 aa).

The protein belongs to the eukaryotic ribosomal protein eL8 family.

In Geobacillus sp. (strain WCH70), this protein is RNA-binding protein GWCH70_0105.